Here is a 506-residue protein sequence, read N- to C-terminus: ATP synthase subunit alpha, chloroplastic (506 aa).

Position 172-179 (172-179 (GDRQTGKT)) interacts with ATP.

Belongs to the ATPase alpha/beta chains family. As to quaternary structure, F-type ATPases have 2 components, CF(1) - the catalytic core - and CF(0) - the membrane proton channel. CF(1) has five subunits: alpha(3), beta(3), gamma(1), delta(1), epsilon(1). CF(0) has four main subunits: a, b, b' and c.

It is found in the plastid. The protein resides in the chloroplast thylakoid membrane. The catalysed reaction is ATP + H2O + 4 H(+)(in) = ADP + phosphate + 5 H(+)(out). Its function is as follows. Produces ATP from ADP in the presence of a proton gradient across the membrane. The alpha chain is a regulatory subunit. In Pleurastrum terricola (Filamentous green alga), this protein is ATP synthase subunit alpha, chloroplastic.